Reading from the N-terminus, the 171-residue chain is Putative ankyrin repeat protein PA3287 (171 aa).

ANK repeat units follow at residues 48-77, 81-110, and 114-143; these read KGDS…DPDL, AGQT…DVEG, and DGKT…RRDA.

The polypeptide is Putative ankyrin repeat protein PA3287 (Pseudomonas aeruginosa (strain ATCC 15692 / DSM 22644 / CIP 104116 / JCM 14847 / LMG 12228 / 1C / PRS 101 / PAO1)).